Consider the following 248-residue polypeptide: Ribosomal RNA small subunit methyltransferase G (248 aa).

Residues G85, F90, 137–138, and R156 each bind S-adenosyl-L-methionine; that span reads IE.

It belongs to the methyltransferase superfamily. RNA methyltransferase RsmG family.

Its subcellular location is the cytoplasm. Specifically methylates the N7 position of a guanine in 16S rRNA. This Parasynechococcus marenigrum (strain WH8102) protein is Ribosomal RNA small subunit methyltransferase G.